Consider the following 261-residue polypeptide: Uridine-cytidine kinase 2-B (261 aa).

ATP is bound at residue 29-37; sequence GGTASGKSS. Aspartate 86, tyrosine 114, histidine 119, arginine 168, arginine 178, and glutamine 186 together coordinate substrate. Aspartate 215 is an ATP binding site. Residues 238-261 are disordered; that stretch reads RQNGFQNGHGTPRQRRTSESSRPH.

Belongs to the uridine kinase family. As to quaternary structure, homotetramer.

The enzyme catalyses uridine + ATP = UMP + ADP + H(+). It carries out the reaction cytidine + ATP = CMP + ADP + H(+). Its pathway is pyrimidine metabolism; CTP biosynthesis via salvage pathway; CTP from cytidine: step 1/3. It participates in pyrimidine metabolism; UMP biosynthesis via salvage pathway; UMP from uridine: step 1/1. Its function is as follows. Phosphorylates uridine and cytidine to uridine monophosphate and cytidine monophosphate. Does not phosphorylate deoxyribonucleosides or purine ribonucleosides. Can use ATP or GTP as a phosphate donor. This Danio rerio (Zebrafish) protein is Uridine-cytidine kinase 2-B (uck2b).